Reading from the N-terminus, the 390-residue chain is Protein YghO (390 aa).

In Escherichia coli (strain K12), this protein is Protein YghO (yghO).